A 218-amino-acid chain; its full sequence is Probable nicotinate-nucleotide adenylyltransferase (218 aa).

Belongs to the NadD family.

It catalyses the reaction nicotinate beta-D-ribonucleotide + ATP + H(+) = deamido-NAD(+) + diphosphate. Its pathway is cofactor biosynthesis; NAD(+) biosynthesis; deamido-NAD(+) from nicotinate D-ribonucleotide: step 1/1. Catalyzes the reversible adenylation of nicotinate mononucleotide (NaMN) to nicotinic acid adenine dinucleotide (NaAD). In Halorhodospira halophila (strain DSM 244 / SL1) (Ectothiorhodospira halophila (strain DSM 244 / SL1)), this protein is Probable nicotinate-nucleotide adenylyltransferase.